The chain runs to 430 residues: C4-dicarboxylate transport protein (430 aa).

A run of 8 helical transmembrane segments spans residues 9–29 (VLYV…HFYP), 45–65 (LIKM…IAGM), 79–99 (LLYF…ATHL), 149–169 (GEIL…AHLG), 185–205 (VLFG…FGAM), 223–243 (LIGT…GAIA), 308–328 (IYMT…LTWM), and 356–376 (AATL…ILGI).

This sequence belongs to the dicarboxylate/amino acid:cation symporter (DAACS) (TC 2.A.23) family.

It localises to the cell inner membrane. In terms of biological role, responsible for the transport of dicarboxylates such as succinate, fumarate, and malate from the periplasm across the membrane. The sequence is that of C4-dicarboxylate transport protein from Burkholderia orbicola (strain MC0-3).